We begin with the raw amino-acid sequence, 838 residues long: Protein translocase subunit SecA (838 aa).

Residues Gln86, Gly104–Thr108, and Asp493 each bind ATP. 2 disordered regions span residues Arg517 to Ser536 and Lys789 to Gln838. Basic and acidic residues predominate over residues Thr801–Gly819. Zn(2+) contacts are provided by Cys824, Cys826, Cys835, and Cys836.

The protein belongs to the SecA family. Monomer and homodimer. Part of the essential Sec protein translocation apparatus which comprises SecA, SecYEG and auxiliary proteins SecDF. Other proteins may also be involved. Zn(2+) serves as cofactor.

It is found in the cell membrane. Its subcellular location is the cytoplasm. It carries out the reaction ATP + H2O + cellular proteinSide 1 = ADP + phosphate + cellular proteinSide 2.. Functionally, part of the Sec protein translocase complex. Interacts with the SecYEG preprotein conducting channel. Has a central role in coupling the hydrolysis of ATP to the transfer of proteins into and across the cell membrane, serving as an ATP-driven molecular motor driving the stepwise translocation of polypeptide chains across the membrane. The chain is Protein translocase subunit SecA from Halalkalibacterium halodurans (strain ATCC BAA-125 / DSM 18197 / FERM 7344 / JCM 9153 / C-125) (Bacillus halodurans).